The sequence spans 113 residues: uncharacterized protein (113 aa).

A helical membrane pass occupies residues F7 to C29.

It is found in the membrane. This is an uncharacterized protein from Aquifex aeolicus (strain VF5).